The following is a 239-amino-acid chain: tRNA uridine(34) hydroxylase (239 aa).

The Rhodanese domain maps to 124–214 (QGRELVMLDT…GILKYFEETD (91 aa)). Cysteine 178 serves as the catalytic Cysteine persulfide intermediate.

It belongs to the TrhO family.

It catalyses the reaction uridine(34) in tRNA + AH2 + O2 = 5-hydroxyuridine(34) in tRNA + A + H2O. Its function is as follows. Catalyzes oxygen-dependent 5-hydroxyuridine (ho5U) modification at position 34 in tRNAs. The chain is tRNA uridine(34) hydroxylase from Bordetella parapertussis (strain 12822 / ATCC BAA-587 / NCTC 13253).